A 59-amino-acid chain; its full sequence is Small ribosomal subunit protein bS21 (59 aa).

Residues 27–59 are disordered; that stretch reads GLMAEMRKREHYEKPSVRRKKKAQARNKKKRYA. The segment covering 31–42 has biased composition (basic and acidic residues); it reads EMRKREHYEKPS. The segment covering 43-59 has biased composition (basic residues); the sequence is VRRKKKAQARNKKKRYA.

The protein belongs to the bacterial ribosomal protein bS21 family.

In Carboxydothermus hydrogenoformans (strain ATCC BAA-161 / DSM 6008 / Z-2901), this protein is Small ribosomal subunit protein bS21.